The chain runs to 337 residues: Inositol 2-dehydrogenase (337 aa).

It belongs to the Gfo/Idh/MocA family. As to quaternary structure, homotetramer.

The enzyme catalyses myo-inositol + NAD(+) = scyllo-inosose + NADH + H(+). Involved in the oxidation of myo-inositol (MI) to 2-keto-myo-inositol (2KMI or 2-inosose). The protein is Inositol 2-dehydrogenase of Corynebacterium glutamicum (strain R).